The sequence spans 221 residues: Carbonic anhydrase (221 aa).

The Zn(2+) site is built by C38, D40, H99, and C102.

This sequence belongs to the beta-class carbonic anhydrase family. It depends on Zn(2+) as a cofactor.

It carries out the reaction hydrogencarbonate + H(+) = CO2 + H2O. The polypeptide is Carbonic anhydrase (cynT) (Helicobacter pylori (strain J99 / ATCC 700824) (Campylobacter pylori J99)).